The sequence spans 482 residues: uncharacterized protein (482 aa).

WD repeat units lie at residues 92-133 and 191-230; these read DMPN…REPI and GHEH…CLCK.

The protein resides in the cytoplasm. The protein localises to the nucleus. This is an uncharacterized protein from Schizosaccharomyces pombe (strain 972 / ATCC 24843) (Fission yeast).